A 473-amino-acid chain; its full sequence is Ribulose bisphosphate carboxylase large chain 3 (473 aa).

Residues Asn116 and Thr166 each coordinate substrate. The active-site Proton acceptor is the Lys168. Lys170 serves as a coordination point for substrate. Lys194, Asp196, and Glu197 together coordinate Mg(2+). At Lys194 the chain carries N6-carboxylysine. His287 serves as the catalytic Proton acceptor. Positions 288, 320, and 372 each coordinate substrate.

It belongs to the RuBisCO large chain family. Type I subfamily. In terms of assembly, heterohexadecamer of 8 large chains and 8 small chains. The cofactor is Mg(2+).

It carries out the reaction 2 (2R)-3-phosphoglycerate + 2 H(+) = D-ribulose 1,5-bisphosphate + CO2 + H2O. The enzyme catalyses D-ribulose 1,5-bisphosphate + O2 = 2-phosphoglycolate + (2R)-3-phosphoglycerate + 2 H(+). Its function is as follows. RuBisCO catalyzes two reactions: the carboxylation of D-ribulose 1,5-bisphosphate, the primary event in carbon dioxide fixation, as well as the oxidative fragmentation of the pentose substrate. Both reactions occur simultaneously and in competition at the same active site. The chain is Ribulose bisphosphate carboxylase large chain 3 from Nitrobacter hamburgensis (strain DSM 10229 / NCIMB 13809 / X14).